The chain runs to 100 residues: Urease subunit gamma (100 aa).

Belongs to the urease gamma subunit family. Heterotrimer of UreA (gamma), UreB (beta) and UreC (alpha) subunits. Three heterotrimers associate to form the active enzyme.

It localises to the cytoplasm. The catalysed reaction is urea + 2 H2O + H(+) = hydrogencarbonate + 2 NH4(+). The protein operates within nitrogen metabolism; urea degradation; CO(2) and NH(3) from urea (urease route): step 1/1. This is Urease subunit gamma from Pseudomonas putida (strain ATCC 700007 / DSM 6899 / JCM 31910 / BCRC 17059 / LMG 24140 / F1).